The primary structure comprises 98 residues: MYAVIKTGGKQYKVEKGMKLKVEKLPYEVGQTVEFEALMLRKDDGSIEFNKGKVIAEVKAHGRGKKLIVFKYRPKKNYKRWKGHRQPYTEIEIKDILP.

Belongs to the bacterial ribosomal protein bL21 family. In terms of assembly, part of the 50S ribosomal subunit. Contacts protein L20.

In terms of biological role, this protein binds to 23S rRNA in the presence of protein L20. In Aquifex aeolicus (strain VF5), this protein is Large ribosomal subunit protein bL21.